The sequence spans 330 residues: Geranylgeranyl diphosphate synthase (330 aa).

Isopentenyl diphosphate is bound by residues Lys43, Arg46, and His75. Positions 82 and 86 each coordinate Mg(2+). Arg91 serves as a coordination point for an all-trans-polyprenyl diphosphate. Arg92 lines the isopentenyl diphosphate pocket. An all-trans-polyprenyl diphosphate is bound by residues Lys175, Thr176, Gln213, Lys230, and Lys240.

The protein belongs to the FPP/GGPP synthase family. Mg(2+) serves as cofactor.

The enzyme catalyses isopentenyl diphosphate + (2E,6E)-farnesyl diphosphate = (2E,6E,10E)-geranylgeranyl diphosphate + diphosphate. Its pathway is isoprenoid biosynthesis; geranylgeranyl diphosphate biosynthesis; geranylgeranyl diphosphate from farnesyl diphosphate and isopentenyl diphosphate: step 1/1. Functionally, catalyzes the condensation of isopentenyl pyrophosphate with the allylic pyrophosphates to yield geranylgeranyl diphosphate (GGPP) which is a precursor of the ether-linked lipids. It is able to use dimethylallyl diphosphate (DMAPP), geranyl diphosphate (GPP), and (all-E)-geranyl diphosphate (E-FPP) as an allylic substrate. The chain is Geranylgeranyl diphosphate synthase (gds) from Sulfolobus acidocaldarius (strain ATCC 33909 / DSM 639 / JCM 8929 / NBRC 15157 / NCIMB 11770).